The sequence spans 1418 residues: JmjC domain-containing histone demethylation protein 1 (1418 aa).

3 disordered regions span residues 1-86 (MIGA…SSST), 102-162 (APLS…STFD), and 308-329 (GADR…SDEN). The segment covering 44–60 (WIDRGDSQAASYDRDRV) has biased composition (basic and acidic residues). The segment covering 61 to 71 (TSNNDVYSSTN) has biased composition (polar residues). Residues 127 to 139 (STERPAKRPRSEK) are compositionally biased toward basic and acidic residues. Over residues 143–162 (PLHQPQTTVAPDANPSSTFD) the composition is skewed to polar residues. Positions 308-321 (GADRASLDVPPRGD) are enriched in basic and acidic residues. A PHD-type zinc finger spans residues 331–391 (QANCAACNLV…KFICRRCRPI (61 aa)). One can recognise a JmjC domain in the interval 588-746 (VSQSKLGKLI…MQIKVAKIEK (159 aa)). A substrate-binding site is contributed by Thr639. His642 and Asp644 together coordinate Fe cation. Lys659 provides a ligand contact to substrate. Residue His714 coordinates Fe cation. Disordered regions lie at residues 891–964 (PQWT…TVEI), 1090–1118 (NAAT…CDDC), 1130–1195 (YGRI…HTQR), and 1250–1394 (KPTA…DEPD). Residues 907–925 (LTEKKPAGRPSRRSERNAE) are compositionally biased toward basic and acidic residues. Composition is skewed to basic and acidic residues over residues 1130 to 1143 (YGRI…ERSK) and 1186 to 1195 (AEGDMSHTQR). Polar residues predominate over residues 1250-1263 (KPTASLVSPPTSQA). Residues 1341–1352 (SSKKPASRPSSS) are compositionally biased toward low complexity.

Belongs to the JHDM1 histone demethylase family. It depends on Fe(2+) as a cofactor.

It is found in the nucleus. It carries out the reaction N(6),N(6)-dimethyl-L-lysyl(36)-[histone H3] + 2 2-oxoglutarate + 2 O2 = L-lysyl(36)-[histone H3] + 2 formaldehyde + 2 succinate + 2 CO2. Functionally, histone demethylase that specifically demethylates 'Lys-36' of histone H3, thereby playing a central role in histone code. The chain is JmjC domain-containing histone demethylation protein 1 (jhd1) from Aspergillus fumigatus (strain ATCC MYA-4609 / CBS 101355 / FGSC A1100 / Af293) (Neosartorya fumigata).